A 715-amino-acid chain; its full sequence is Coiled-coil domain-containing protein 170 (715 aa).

3 coiled-coil regions span residues 30–286, 360–418, and 478–656; these read VTRE…AGQQ, ESRD…LVSG, and ENKT…FREV. The segment at 355 to 591 is required for binding to microtubules and Golgi apparatus location; it reads MDSREESRDR…DLNKSRDQLE (237 aa).

Binds Golgi-associated microtubules.

The protein localises to the golgi apparatus. Functionally, plays a role in Golgi-associated microtubules organization and stabilization. The sequence is that of Coiled-coil domain-containing protein 170 from Homo sapiens (Human).